A 363-amino-acid polypeptide reads, in one-letter code: Ribosomal RNA large subunit methyltransferase M (363 aa).

S-adenosyl-L-methionine-binding positions include Ser194, 227 to 230 (CPGG), Asp246, Asp266, and Asp284. Catalysis depends on Lys313, which acts as the Proton acceptor.

The protein belongs to the class I-like SAM-binding methyltransferase superfamily. RNA methyltransferase RlmE family. RlmM subfamily. As to quaternary structure, monomer.

It is found in the cytoplasm. The enzyme catalyses cytidine(2498) in 23S rRNA + S-adenosyl-L-methionine = 2'-O-methylcytidine(2498) in 23S rRNA + S-adenosyl-L-homocysteine + H(+). Catalyzes the 2'-O-methylation at nucleotide C2498 in 23S rRNA. This Haemophilus influenzae (strain PittEE) protein is Ribosomal RNA large subunit methyltransferase M.